A 271-amino-acid chain; its full sequence is Ribosomal RNA small subunit methyltransferase A (271 aa).

His11, Leu13, Gly38, Glu58, Asp86, and Asn101 together coordinate S-adenosyl-L-methionine.

This sequence belongs to the class I-like SAM-binding methyltransferase superfamily. rRNA adenine N(6)-methyltransferase family. RsmA subfamily.

It is found in the cytoplasm. The enzyme catalyses adenosine(1518)/adenosine(1519) in 16S rRNA + 4 S-adenosyl-L-methionine = N(6)-dimethyladenosine(1518)/N(6)-dimethyladenosine(1519) in 16S rRNA + 4 S-adenosyl-L-homocysteine + 4 H(+). Its function is as follows. Specifically dimethylates two adjacent adenosines (A1518 and A1519) in the loop of a conserved hairpin near the 3'-end of 16S rRNA in the 30S particle. May play a critical role in biogenesis of 30S subunits. In Helicobacter pylori (strain J99 / ATCC 700824) (Campylobacter pylori J99), this protein is Ribosomal RNA small subunit methyltransferase A.